Reading from the N-terminus, the 304-residue chain is UDP-N-acetylenolpyruvoylglucosamine reductase (304 aa).

Residues 33-198 form the FAD-binding PCMH-type domain; the sequence is RVGGPVDILL…ITATFCFESG (166 aa). Arg-177 is a catalytic residue. The Proton donor role is filled by Ser-227. Glu-297 is an active-site residue.

The protein belongs to the MurB family. It depends on FAD as a cofactor.

The protein resides in the cytoplasm. It carries out the reaction UDP-N-acetyl-alpha-D-muramate + NADP(+) = UDP-N-acetyl-3-O-(1-carboxyvinyl)-alpha-D-glucosamine + NADPH + H(+). The protein operates within cell wall biogenesis; peptidoglycan biosynthesis. Its function is as follows. Cell wall formation. This Clostridium botulinum (strain Eklund 17B / Type B) protein is UDP-N-acetylenolpyruvoylglucosamine reductase.